The following is a 702-amino-acid chain: Transposon Tn7 transposition protein TnsB (702 aa).

The DNA-binding domain 1 (DBD1) stretch occupies residues 1–139 (MWQINEVVLF…GQTPNALIPD (139 aa)). The segment at residues 105-124 (VEHVVQEHKVTKATVYKLLR) is a DNA-binding region (H-T-H motif). Positions 137-160 (IPDYKNSGAPGERRSATGTAKIGR) are disordered. The linker 1 stretch occupies residues 140–172 (YKNSGAPGERRSATGTAKIGRAREYGKGEGTKV). A DNA-binding domain 2 (DBD2) region spans residues 173-233 (TPEIERLFRL…QFRYFYDREY (61 aa)). The linker 2 stretch occupies residues 234–267 (PKAQRLKSRVKAGVYKKDVRPLSSTATSQALGPG). One can recognise an Integrase catalytic domain in the interval 262–480 (QALGPGSRYE…IPVQLWQWGM (219 aa)). The interval 268 to 582 (SRYEIDATIA…RSRQFKGLSF (315 aa)) is catalytic domain (CD). The interval 589–702 (QAQEKHNKAN…FQDPPEKDES (114 aa)) is C-terminal domain. Residues 623-702 (KLTPSTTEPK…FQDPPEKDES (80 aa)) are disordered.

Heteromer with TnsA.

Sequence-specific, DNA-binding protein required for Tn7 transposition. Recognizes sequences necessary for recombination at both left and right ends of Tn7 and, together with TnsA, forms the transposase. TnsB executes the 3'-DNA strand breakage and joining reactions. TnsB binding introduces DNA bending. There are 3 DNA-binding sites in the left and 4 in the right end of Tn7; as TnsB levels increase more TnsB is bound, suggesting high protein levels contribute to transposon immunity. Binding of TnsB to the transposon right end represses expression of the downstream transposition genes. TnsABC + TnsD promote high-frequency insertion of Tn7 into a specific target site known as att-Tn7 whereas TnsABC + TnsE promote low-frequency insertion into many different sites. The protein is Transposon Tn7 transposition protein TnsB of Escherichia coli.